The chain runs to 173 residues: Co-chaperone protein HscB homolog (173 aa).

The region spanning 2-74 (NYFELFSLSP…ISRAEHMLSL (73 aa)) is the J domain.

The protein belongs to the HscB family. Interacts with HscA and stimulates its ATPase activity.

In terms of biological role, co-chaperone involved in the maturation of iron-sulfur cluster-containing proteins. Seems to help targeting proteins to be folded toward HscA. The polypeptide is Co-chaperone protein HscB homolog (Shewanella loihica (strain ATCC BAA-1088 / PV-4)).